Here is a 509-residue protein sequence, read N- to C-terminus: Maturase K (509 aa).

Belongs to the intron maturase 2 family. MatK subfamily.

It is found in the plastid. It localises to the chloroplast. Functionally, usually encoded in the trnK tRNA gene intron. Probably assists in splicing its own and other chloroplast group II introns. In Banksia cuneata (Quairading banksia), this protein is Maturase K.